Here is a 334-residue protein sequence, read N- to C-terminus: Cytochrome c551 peroxidase (334 aa).

A signal peptide spans 1–26 (MIKRTLTVSLLSLSLGAMFASAGVMA). Heme c-binding residues include C65, C68, H69, C209, C212, H213, H270, and M284. The tract at residues 315 to 334 (FKLPILPPSNNDTPRSQPYE) is disordered. Over residues 322-334 (PSNNDTPRSQPYE) the composition is skewed to polar residues.

In terms of processing, binds 2 heme c groups covalently per subunit.

The protein localises to the periplasm. It carries out the reaction 2 Fe(II)-[cytochrome c] + H2O2 + 2 H(+) = 2 Fe(III)-[cytochrome c] + 2 H2O. The protein is Cytochrome c551 peroxidase (ccp) of Nitrosomonas europaea (strain ATCC 19718 / CIP 103999 / KCTC 2705 / NBRC 14298).